The following is a 358-amino-acid chain: Holliday junction branch migration complex subunit RuvB (358 aa).

Residues methionine 1–proline 24 are disordered. A large ATPase domain (RuvB-L) region spans residues threonine 5–tyrosine 194. ATP contacts are provided by residues leucine 33, arginine 34, glycine 75, lysine 78, threonine 79, threonine 80, glutamate 141–tyrosine 143, arginine 184, tyrosine 194, and arginine 231. Residue threonine 79 participates in Mg(2+) binding. Residues serine 195–aspartate 265 are small ATPAse domain (RuvB-S). The tract at residues proline 268–glutamate 358 is head domain (RuvB-H). Arginine 304, arginine 323, and arginine 328 together coordinate DNA.

It belongs to the RuvB family. In terms of assembly, homohexamer. Forms an RuvA(8)-RuvB(12)-Holliday junction (HJ) complex. HJ DNA is sandwiched between 2 RuvA tetramers; dsDNA enters through RuvA and exits via RuvB. An RuvB hexamer assembles on each DNA strand where it exits the tetramer. Each RuvB hexamer is contacted by two RuvA subunits (via domain III) on 2 adjacent RuvB subunits; this complex drives branch migration. In the full resolvosome a probable DNA-RuvA(4)-RuvB(12)-RuvC(2) complex forms which resolves the HJ.

Its subcellular location is the cytoplasm. It catalyses the reaction ATP + H2O = ADP + phosphate + H(+). In terms of biological role, the RuvA-RuvB-RuvC complex processes Holliday junction (HJ) DNA during genetic recombination and DNA repair, while the RuvA-RuvB complex plays an important role in the rescue of blocked DNA replication forks via replication fork reversal (RFR). RuvA specifically binds to HJ cruciform DNA, conferring on it an open structure. The RuvB hexamer acts as an ATP-dependent pump, pulling dsDNA into and through the RuvAB complex. RuvB forms 2 homohexamers on either side of HJ DNA bound by 1 or 2 RuvA tetramers; 4 subunits per hexamer contact DNA at a time. Coordinated motions by a converter formed by DNA-disengaged RuvB subunits stimulates ATP hydrolysis and nucleotide exchange. Immobilization of the converter enables RuvB to convert the ATP-contained energy into a lever motion, pulling 2 nucleotides of DNA out of the RuvA tetramer per ATP hydrolyzed, thus driving DNA branch migration. The RuvB motors rotate together with the DNA substrate, which together with the progressing nucleotide cycle form the mechanistic basis for DNA recombination by continuous HJ branch migration. Branch migration allows RuvC to scan DNA until it finds its consensus sequence, where it cleaves and resolves cruciform DNA. This is Holliday junction branch migration complex subunit RuvB from Albidiferax ferrireducens (strain ATCC BAA-621 / DSM 15236 / T118) (Rhodoferax ferrireducens).